Consider the following 289-residue polypeptide: Eukaryotic translation initiation factor 3 subunit G (289 aa).

Disordered regions lie at residues 1–31 (MSRL…VISN) and 151–199 (DTMA…GEKM). The RRM domain occupies 209-287 (ATLRVTNVSE…LILRVEFAKK (79 aa)).

Belongs to the eIF-3 subunit G family. In terms of assembly, component of the eukaryotic translation initiation factor 3 (eIF-3) complex.

It is found in the cytoplasm. RNA-binding component of the eukaryotic translation initiation factor 3 (eIF-3) complex, which is involved in protein synthesis of a specialized repertoire of mRNAs and, together with other initiation factors, stimulates binding of mRNA and methionyl-tRNAi to the 40S ribosome. The eIF-3 complex specifically targets and initiates translation of a subset of mRNAs involved in cell proliferation. This subunit can bind 18S rRNA. This is Eukaryotic translation initiation factor 3 subunit G from Coccidioides immitis (strain RS) (Valley fever fungus).